The sequence spans 226 residues: UPF0758 protein gbs1168 (226 aa).

An MPN domain is found at 103-225 (QILSSEQLAR…YYSFREEADI (123 aa)). H174, H176, and D187 together coordinate Zn(2+). The short motif at 174 to 187 (HNHPSGSPNPSESD) is the JAMM motif element.

The protein belongs to the UPF0758 family.

The chain is UPF0758 protein gbs1168 from Streptococcus agalactiae serotype III (strain NEM316).